The following is an 84-amino-acid chain: RQC P-site tRNA stabilizing factor (84 aa).

The region spanning 1–64 (MRIDKFLQSV…IEEYTILQIP (64 aa)) is the S4 RNA-binding domain.

This sequence belongs to the RqcP family. As to quaternary structure, associates with stalled 50S ribosomal subunits. Binds to RqcH, 23S rRNA and the P-site tRNA. Does not require RqcH for association with 50S subunits.

Functionally, key component of the ribosome quality control system (RQC), a ribosome-associated complex that mediates the extraction of incompletely synthesized nascent chains from stalled ribosomes and their subsequent degradation. RqcH recruits Ala-charged tRNA, and with RqcP directs the elongation of stalled nascent chains on 50S ribosomal subunits, leading to non-templated C-terminal alanine extensions (Ala tail). The Ala tail promotes nascent chain degradation. RqcP is associated with the translocation-like movement of the peptidyl-tRNA from the A-site into the P-site. This Helicobacter pylori (strain J99 / ATCC 700824) (Campylobacter pylori J99) protein is RQC P-site tRNA stabilizing factor.